The sequence spans 224 residues: Large ribosomal subunit protein bL25 (224 aa).

The tract at residues 195-224 (TVEEVDEAAEVDAADVPATEQGTDESKDGE) is disordered. Acidic residues predominate over residues 197 to 207 (EEVDEAAEVDA).

This sequence belongs to the bacterial ribosomal protein bL25 family. CTC subfamily. As to quaternary structure, part of the 50S ribosomal subunit; part of the 5S rRNA/L5/L18/L25 subcomplex. Contacts the 5S rRNA. Binds to the 5S rRNA independently of L5 and L18.

Functionally, this is one of the proteins that binds to the 5S RNA in the ribosome where it forms part of the central protuberance. This Psychrobacter cryohalolentis (strain ATCC BAA-1226 / DSM 17306 / VKM B-2378 / K5) protein is Large ribosomal subunit protein bL25.